A 1829-amino-acid chain; its full sequence is MAASELYTKYARVWIPDPEEVWKSAELLKDYKPGDKVLQLRLEEGKDLEYCLDPKTKELPPLRNPDILVGENDLTALSYLHEPAVLHNLKVRFIDSKLIYTYCGIVLVAINPYEQLPIYGEDIINAYSGQNMGDMDPHIFAVAEEAYKQMARDERNQSIIVSGESGAGKTVSAKYAMRYFATVSGSASEANVEEKVLASNPIMESIGNAKTTRNDNSSRFGKYIEIGFDKRYRIIGANMRTYLLEKSRVVFQAEEERNYHIFYQLCASAALPEFKTLRLGNANYFHYTKQGGSPVIDGIDDAKEMVNTRQACTLLGISDSYQMGIFRILAGILHLGNVEFASRDSDSCAIPPKHDPLTIFCDLMGVDYEEMAHWLCHRKLATATETYIKPISKLHAINARDALAKHIYANLFNWIVDHVNKALHSTVKQHSFIGVLDIYGFETFEINSFEQFCINYANEKLQQQFNMHVFKLEQEEYMKEQIPWTLIDFYDNQPCINLIEAKMGVLDLLDEECKMPKGSDDTWAQKLYNTHLNKCALFEKPRLSNKAFIIKHFADKVEYQCEGFLEKNKDTVYEEQIKVLKSSKKFKLLPELFQDEEKAISPTSATPSGRVPLSRTPVKPAKARPGQTSKEHKKTVGHQFRNSLHLLMETLNATTPHYVRCIKPNDFKFPFTFDEKRAVQQLRACGVLETIRISAAGFPSRWTYQEFFSRYRVLMKQKDVLSDRKQTCKNVLEKLILDKDKYQFGKTKIFFRAGQVAYLEKIRADKLRAACIRIQKTIRGWLMRKKYMRMRRAAITIQRYVRGHQARCYATFLRRTRAAIIIQKFQRMYVVRKRYQCMRDATIALQALLRGYLVRNKYQMMLREHKSIIIQKHVRGWLARVHYHRTLKAIVYLQCCYRRMMAKRELKKLKIEARSVERYKKLHIGLENKIMQLQRKIDEQNKEYKSLLEKMNNLEITYSTETEKLRSDVERLRMSEEEAKNATNRVLSLQEEIAKLRKELHQTQTEKKTIEEWADKYKHETEQLVSELKEQNTLLKTEKEELNRRIHDQAKEITETMEKKLVEETKQLELDLNDERLRYQNLLNEFSRLEERYDDLKDEMNLMVSIPKPGHKRTDSTHSSNESEYTFSSEITEAEDLPLRMEEPSEKKAPLDMSLFLKLQKRVTELEQEKQSLQDELDRKEEQALRAKAKEEERPPIRGAELEYESLKRQELESENKKLKNELNELQKALTETRAPEVTAPGAPAYRVLLDQLTSVSEELEVRKEEVLILRSQLVSQKEAIQPKEDKNTMTDSTILLEDVQKMKDKGEIAQAYIGLKETNRLLESQLQSQKKSHENELESLRGEIQSLKEENNRQQQLLAQNLQLPPEARIEASLQHEITRLTNENLDLMEQLEKQDKTVRKLKKQLKVFAKKIGELEVGQMENISPGQIIDEPIRPVNIPRKEKDFQGMLEYKKEDEQKLVKNLILELKPRGVAVNLIPGLPAYILFMCVRHADYLNDDQKVRSLLTSTINGIKKVLKKRGDDFETVSFWLSNTCRFLHCLKQYSGEEGFMKHNTPRQNEHCLTNFDLAEYRQVLSDLAIQIYQQLVRVLENILQPMIVSGMLEHETIQGVSGVKPTGLRKRTSSIADEGTYTLDSIIRQLNSFHSVMCQHGMDPELIKQVVKQMFYIIGAVTLNNLLLRKDMCSWSKGMQIRYNVSQLEEWLRDKNLMNSGAKETLEPLIQAAQLLQVKKKTDEDAEAICSMCNALTTAQIVKVLNLYTPVNEFEERVLVSFIRTIQLRLRDRKDSPQLLMDAKHIFPVTFPFNPSSLALETIQIPASLGLGFISRV.

The Myosin N-terminal SH3-like domain occupies 8–60 (TKYARVWIPDPEEVWKSAELLKDYKPGDKVLQLRLEEGKDLEYCLDPKTKELP). Positions 69–764 (VGENDLTALS…QVAYLEKIRA (696 aa)) constitute a Myosin motor domain. Position 163–170 (163–170 (GESGAGKT)) interacts with ATP. Residues 599–635 (AISPTSATPSGRVPLSRTPVKPAKARPGQTSKEHKKT) form a disordered region. The tract at residues 644–666 (LHLLMETLNATTPHYVRCIKPND) is actin-binding. IQ domains lie at 767–789 (LRAA…KYMR), 790–814 (MRRA…TFLR), 815–837 (RTRA…RYQC), 838–862 (MRDA…QMML), 863–887 (REHK…HRTL), and 888–915 (KAIV…EARS). 2 coiled-coil regions span residues 916–1239 (VERY…PEVT) and 1315–1419 (GLKE…ELEV). 2 disordered regions span residues 1106–1148 (IPKP…SEKK) and 1170–1199 (KQSL…PIRG). Residues 1117–1131 (THSSNESEYTFSSEI) show a composition bias toward polar residues. Basic and acidic residues-rich tracts occupy residues 1137-1148 (LPLRMEEPSEKK) and 1170-1196 (KQSL…ERPP). The region spanning 1508–1784 (TSTINGIKKV…IRTIQLRLRD (277 aa)) is the Dilute domain. Residue threonine 1734 is modified to Phosphothreonine.

This sequence belongs to the TRAFAC class myosin-kinesin ATPase superfamily. Myosin family. In terms of assembly, may be a homodimer, which associates with multiple calmodulin or myosin light chains. In terms of tissue distribution, neuronal and non-neuronal cells of the brain.

It is found in the golgi apparatus membrane. The enzyme catalyses ATP + H2O = ADP + phosphate + H(+). In terms of biological role, processive actin-based motor that can move in large steps approximating the 36-nm pseudo-repeat of the actin filament. Can hydrolyze ATP in the presence of actin, which is essential for its function as a motor protein. Involved in melanosome transport. Also mediates the transport of vesicles to the plasma membrane. May also be required for some polarization process involved in dendrite formation. The polypeptide is Unconventional myosin-Va (MYO5A) (Gallus gallus (Chicken)).